Consider the following 337-residue polypeptide: MEEELKSFVKVWGSAIISVSYCYYIPSKIKRGVHRLLSVLPVCVLFLVLPLFFVFTIFSSTTAFCLSILANFKLILFAFDKGPLLPLPTNLFRFICFTCLPIKLQTKPNSQNHLPKWVLPSKVAIFVLLLNIRSYKILLPPILLLGLYPLHLYIVLDVLLTIVNALLTIILRCDLEPHFNEPYLATSLQDFWGHRWNLMVSAIYRPGVYSPVRSVCQHQMRSDWARFMGCMTTFFVSGLIHELVYFYINREKPTLEVTWFFVLHGVCTAMEIAVKRKMQWSLSPMLLRLITVGFLVVTGDLLFFGQIERSNMLERRANEASLFIDFVKRKVFNYTVS.

Transmembrane regions (helical) follow at residues S7–S27, S38–F58, S59–F79, G82–I102, I142–I162, M228–I248, T254–V274, and M285–G305.

This sequence belongs to the wax synthase family.

It localises to the membrane. The enzyme catalyses a long chain fatty alcohol + a fatty acyl-CoA = a wax ester + CoA. Catalyzes the final step in the synthesis of long-chain linear esters (waxes). This chain is Putative long-chain-alcohol O-fatty-acyltransferase 10, found in Arabidopsis thaliana (Mouse-ear cress).